The following is a 213-amino-acid chain: Ribosomal RNA small subunit methyltransferase G (213 aa).

Residues Gly72, Phe77, 125 to 126, and Arg141 contribute to the S-adenosyl-L-methionine site; that span reads IE.

The protein belongs to the methyltransferase superfamily. RNA methyltransferase RsmG family.

It is found in the cytoplasm. The enzyme catalyses guanosine(527) in 16S rRNA + S-adenosyl-L-methionine = N(7)-methylguanosine(527) in 16S rRNA + S-adenosyl-L-homocysteine. In terms of biological role, specifically methylates the N7 position of guanine in position 527 of 16S rRNA. The chain is Ribosomal RNA small subunit methyltransferase G from Sinorhizobium medicae (strain WSM419) (Ensifer medicae).